Here is a 344-residue protein sequence, read N- to C-terminus: Ribosomal RNA large subunit methyltransferase Cfr (344 aa).

Glutamate 90 (proton acceptor) is an active-site residue. Positions 97-330 constitute a Radical SAM core domain; it reads KQGWESFCIS…ATVRTQFGSE (234 aa). A disulfide bridge links cysteine 104 with cysteine 335. Positions 111, 115, and 118 each coordinate [4Fe-4S] cluster. Residues 157–158, serine 188, 211–213, and asparagine 292 each bind S-adenosyl-L-methionine; these read GE and SLH. The active-site S-methylcysteine intermediate is the cysteine 335.

It belongs to the radical SAM superfamily. RlmN family. Cfr subfamily. [4Fe-4S] cluster serves as cofactor.

It localises to the cytoplasm. The enzyme catalyses adenosine(2503) in 23S rRNA + 2 reduced [2Fe-2S]-[ferredoxin] + 2 S-adenosyl-L-methionine = 8-methyladenosine(2503) in 23S rRNA + 5'-deoxyadenosine + L-methionine + 2 oxidized [2Fe-2S]-[ferredoxin] + S-adenosyl-L-homocysteine. In terms of biological role, specifically methylates position 8 of adenine 2503 in 23S rRNA. Confers resistance to some classes of antibiotics. This is Ribosomal RNA large subunit methyltransferase Cfr from Clostridium botulinum (strain Hall / ATCC 3502 / NCTC 13319 / Type A).